The primary structure comprises 204 residues: DNA-directed RNA polymerase III subunit RPC8 (204 aa).

Positions 158 to 178 (VDTSPTGPSSAEAASSSEELP) are disordered. A compositionally biased stretch (low complexity) spans 166–175 (SSAEAASSSE).

The protein belongs to the eukaryotic RPB7/RPC8 RNA polymerase subunit family. Component of the RNA polymerase III complex consisting of 17 subunits: a ten-subunit horseshoe-shaped catalytic core composed of POLR3A/RPC1, POLR3B/RPC2, POLR1C/RPAC1, POLR1D/RPAC2, POLR3K/RPC10, POLR2E/RPABC1, POLR2F/RPABC2, POLR2H/RPABC3, POLR2K/RPABC4 and POLR2L/RPABC5; a mobile stalk composed of two subunits POLR3H/RPC8 and CRCP/RPC9, protruding from the core and functioning primarily in transcription initiation; and additional subunits homologous to general transcription factors of the RNA polymerase II machinery, POLR3C/RPC3-POLR3F/RPC6-POLR3G/RPC7 heterotrimer required for transcription initiation and POLR3D/RPC4-POLR3E/RPC5 heterodimer involved in both transcription initiation and termination. Interacts with CRCP/RPC9. POLR3H/RPC8 and CRCP/RPC9 probably form a Pol III subcomplex.

Its subcellular location is the nucleus. DNA-dependent RNA polymerase catalyzes the transcription of DNA into RNA using the four ribonucleoside triphosphates as substrates. Specific peripheric component of RNA polymerase III (Pol III) which synthesizes small non-coding RNAs including 5S rRNA, snRNAs, tRNAs and miRNAs from at least 500 distinct genomic loci. With CRCP/RPC9 forms a mobile stalk that protrudes from Pol III core and functions primarily in transcription initiation. Pol III plays a key role in sensing and limiting infection by intracellular bacteria and DNA viruses. Acts as nuclear and cytosolic DNA sensor involved in innate immune response. Can sense non-self dsDNA that serves as template for transcription into dsRNA. The non-self RNA polymerase III transcripts, such as Epstein-Barr virus-encoded RNAs (EBERs) induce type I interferon and NF-kappa-B through the RIG-I pathway. This is DNA-directed RNA polymerase III subunit RPC8 (POLR3H) from Bos taurus (Bovine).